The chain runs to 87 residues: Phosphoribosyl-ATP pyrophosphatase (87 aa).

This sequence belongs to the PRA-PH family.

Its subcellular location is the cytoplasm. It carries out the reaction 1-(5-phospho-beta-D-ribosyl)-ATP + H2O = 1-(5-phospho-beta-D-ribosyl)-5'-AMP + diphosphate + H(+). Its pathway is amino-acid biosynthesis; L-histidine biosynthesis; L-histidine from 5-phospho-alpha-D-ribose 1-diphosphate: step 2/9. The sequence is that of Phosphoribosyl-ATP pyrophosphatase from Nocardioides sp. (strain ATCC BAA-499 / JS614).